The chain runs to 616 residues: Dihydroxy-acid dehydratase (616 aa).

Residue aspartate 81 participates in Mg(2+) binding. Cysteine 122 provides a ligand contact to [2Fe-2S] cluster. Mg(2+) contacts are provided by aspartate 123 and lysine 124. Position 124 is an N6-carboxylysine (lysine 124). Residue cysteine 195 participates in [2Fe-2S] cluster binding. A Mg(2+)-binding site is contributed by glutamate 491. Serine 517 (proton acceptor) is an active-site residue.

This sequence belongs to the IlvD/Edd family. As to quaternary structure, homodimer. Requires [2Fe-2S] cluster as cofactor. Mg(2+) serves as cofactor.

It catalyses the reaction (2R)-2,3-dihydroxy-3-methylbutanoate = 3-methyl-2-oxobutanoate + H2O. The enzyme catalyses (2R,3R)-2,3-dihydroxy-3-methylpentanoate = (S)-3-methyl-2-oxopentanoate + H2O. The protein operates within amino-acid biosynthesis; L-isoleucine biosynthesis; L-isoleucine from 2-oxobutanoate: step 3/4. It functions in the pathway amino-acid biosynthesis; L-valine biosynthesis; L-valine from pyruvate: step 3/4. In terms of biological role, functions in the biosynthesis of branched-chain amino acids. Catalyzes the dehydration of (2R,3R)-2,3-dihydroxy-3-methylpentanoate (2,3-dihydroxy-3-methylvalerate) into 2-oxo-3-methylpentanoate (2-oxo-3-methylvalerate) and of (2R)-2,3-dihydroxy-3-methylbutanoate (2,3-dihydroxyisovalerate) into 2-oxo-3-methylbutanoate (2-oxoisovalerate), the penultimate precursor to L-isoleucine and L-valine, respectively. The chain is Dihydroxy-acid dehydratase from Pectobacterium atrosepticum (strain SCRI 1043 / ATCC BAA-672) (Erwinia carotovora subsp. atroseptica).